We begin with the raw amino-acid sequence, 860 residues long: Leucine--tRNA ligase (860 aa).

The 'HIGH' region motif lies at 42–52; sequence PYPSGRLHMGH. The 'KMSKS' region motif lies at 619-623; the sequence is KMSKS. ATP is bound at residue Lys-622.

The protein belongs to the class-I aminoacyl-tRNA synthetase family.

The protein resides in the cytoplasm. It carries out the reaction tRNA(Leu) + L-leucine + ATP = L-leucyl-tRNA(Leu) + AMP + diphosphate. The polypeptide is Leucine--tRNA ligase (Escherichia coli (strain ATCC 8739 / DSM 1576 / NBRC 3972 / NCIMB 8545 / WDCM 00012 / Crooks)).